The sequence spans 1055 residues: Pre-mRNA-splicing factor ATP-dependent RNA helicase-like protein cdc28 (1055 aa).

Basic and acidic residues predominate over residues 67–78; that stretch reads PREGSRPKENYN. Residues 67 to 184 form a disordered region; the sequence is PREGSRPKEN…TERLNDLRER (118 aa). Basic residues predominate over residues 112–121; sequence PLKKKSRSKT. The span at 122 to 132 shows a compositional bias: basic and acidic residues; it reads PKREIARRQRD. Residues 133-145 are compositionally biased toward acidic residues; sequence EDEWESDEYEEVV. Residues 163-184 show a composition bias toward basic and acidic residues; the sequence is QNHDYEKSSDPETERLNDLRER. The Helicase ATP-binding domain maps to 428–592; it reads LKAINEYQVL…FDEAPVFYVP (165 aa). 441-448 is an ATP binding site; that stretch reads AETGSGKT. The short motif at 539–542 is the DEAH box element; it reads DEAH. One can recognise a Helicase C-terminal domain in the interval 617-790; it reads TILQIHTTQP…NIVLLLKSLG (174 aa).

Belongs to the DEAD box helicase family. DEAH subfamily. DDX16/PRP8 sub-subfamily.

The protein resides in the nucleus. The enzyme catalyses ATP + H2O = ADP + phosphate + H(+). Involved in pre-mRNA splicing. Is required together with ATP and at least one other factor, for the first cleavage-ligation reaction. Functions as a molecular motor in the activation of the precatalytic spliceosome for the first transesterification reaction of pre-mRNA splicing by hydrolyzing ATP to cause the activation of the spliceosome without the occurrence of splicing. The chain is Pre-mRNA-splicing factor ATP-dependent RNA helicase-like protein cdc28 (cdc28) from Schizosaccharomyces pombe (strain 972 / ATCC 24843) (Fission yeast).